The primary structure comprises 396 residues: L-lactate dehydrogenase (396 aa).

In terms of domain architecture, FMN hydroxy acid dehydrogenase spans 1–380 (MIISAASDYR…TQDSLVQGLG (380 aa)). Position 24 (Tyr24) interacts with substrate. Positions 106 and 127 each coordinate FMN. Substrate is bound at residue Tyr129. Thr155 provides a ligand contact to FMN. A substrate-binding site is contributed by Arg164. Lys251 serves as a coordination point for FMN. His275 serves as the catalytic Proton acceptor. Residue Arg278 coordinates substrate. 306–330 (DSGIRNGLDVVRMIALGADTVLLGR) contributes to the FMN binding site.

Belongs to the FMN-dependent alpha-hydroxy acid dehydrogenase family. Requires FMN as cofactor.

Its subcellular location is the cell inner membrane. It catalyses the reaction (S)-lactate + A = pyruvate + AH2. Its function is as follows. Catalyzes the conversion of L-lactate to pyruvate. Is coupled to the respiratory chain. In Escherichia coli O7:K1 (strain IAI39 / ExPEC), this protein is L-lactate dehydrogenase.